Here is a 341-residue protein sequence, read N- to C-terminus: Glycerol-3-phosphate dehydrogenase [NAD(P)+] (341 aa).

Ser-14, Phe-15, Arg-35, and Lys-108 together coordinate NADPH. Residues Lys-108 and Gly-136 each coordinate sn-glycerol 3-phosphate. Residue Ala-140 participates in NADPH binding. Positions 191, 244, 254, 255, and 256 each coordinate sn-glycerol 3-phosphate. Catalysis depends on Lys-191, which acts as the Proton acceptor. Position 255 (Arg-255) interacts with NADPH. NADPH-binding residues include Val-279 and Glu-281.

Belongs to the NAD-dependent glycerol-3-phosphate dehydrogenase family.

The protein resides in the cytoplasm. It carries out the reaction sn-glycerol 3-phosphate + NAD(+) = dihydroxyacetone phosphate + NADH + H(+). It catalyses the reaction sn-glycerol 3-phosphate + NADP(+) = dihydroxyacetone phosphate + NADPH + H(+). It functions in the pathway membrane lipid metabolism; glycerophospholipid metabolism. In terms of biological role, catalyzes the reduction of the glycolytic intermediate dihydroxyacetone phosphate (DHAP) to sn-glycerol 3-phosphate (G3P), the key precursor for phospholipid synthesis. This Pseudomonas syringae pv. syringae (strain B728a) protein is Glycerol-3-phosphate dehydrogenase [NAD(P)+].